The chain runs to 383 residues: Large ribosomal subunit protein uL3 (383 aa).

This sequence belongs to the universal ribosomal protein uL3 family.

It is found in the cytoplasm. This Encephalitozoon cuniculi (strain GB-M1) (Microsporidian parasite) protein is Large ribosomal subunit protein uL3 (RPL3-1).